Reading from the N-terminus, the 594-residue chain is Arginine--tRNA ligase (594 aa).

Residues Ala-139–His-149 carry the 'HIGH' region motif.

Belongs to the class-I aminoacyl-tRNA synthetase family. In terms of assembly, monomer.

The protein localises to the cytoplasm. The enzyme catalyses tRNA(Arg) + L-arginine + ATP = L-arginyl-tRNA(Arg) + AMP + diphosphate. This Burkholderia thailandensis (strain ATCC 700388 / DSM 13276 / CCUG 48851 / CIP 106301 / E264) protein is Arginine--tRNA ligase.